A 364-amino-acid chain; its full sequence is Chorismate synthase (364 aa).

NADP(+)-binding residues include R47 and R53. FMN contacts are provided by residues R124–S126, G286, K301–T305, and R327.

It belongs to the chorismate synthase family. Homotetramer. FMNH2 is required as a cofactor.

It catalyses the reaction 5-O-(1-carboxyvinyl)-3-phosphoshikimate = chorismate + phosphate. It functions in the pathway metabolic intermediate biosynthesis; chorismate biosynthesis; chorismate from D-erythrose 4-phosphate and phosphoenolpyruvate: step 7/7. In terms of biological role, catalyzes the anti-1,4-elimination of the C-3 phosphate and the C-6 proR hydrogen from 5-enolpyruvylshikimate-3-phosphate (EPSP) to yield chorismate, which is the branch point compound that serves as the starting substrate for the three terminal pathways of aromatic amino acid biosynthesis. This reaction introduces a second double bond into the aromatic ring system. This chain is Chorismate synthase, found in Acaryochloris marina (strain MBIC 11017).